A 201-amino-acid polypeptide reads, in one-letter code: Retinol-binding protein 4 (201 aa).

Positions 1-18 (MEWVWALVLLAALGGGSA) are cleaved as a signal peptide. Intrachain disulfides connect C22-C178, C88-C192, and C138-C147. Q116 contacts substrate. R139 is subject to Omega-N-methylarginine.

This sequence belongs to the calycin superfamily. Lipocalin family. Interacts with TTR. Interaction with TTR prevents its loss by filtration through the kidney glomeruli. Interacts with STRA6.

Its subcellular location is the secreted. Functionally, retinol-binding protein that mediates retinol transport in blood plasma. Delivers retinol from the liver stores to the peripheral tissues. Transfers the bound all-trans retinol to STRA6, that then facilitates retinol transport across the cell membrane. The polypeptide is Retinol-binding protein 4 (Rbp4) (Mus musculus (Mouse)).